Here is a 512-residue protein sequence, read N- to C-terminus: GMP synthase [glutamine-hydrolyzing] (512 aa).

Residues 6–195 (KIIILDFGSQ…VFNICGCQPK (190 aa)) enclose the Glutamine amidotransferase type-1 domain. C83 functions as the Nucleophile in the catalytic mechanism. Residues H169 and E171 contribute to the active site. Residues 196–387 (WKITEFISAA…LGIDFKFVYK (192 aa)) form the GMPS ATP-PPase domain. 223–229 (SGGVDSS) serves as a coordination point for ATP.

Homodimer.

The enzyme catalyses XMP + L-glutamine + ATP + H2O = GMP + L-glutamate + AMP + diphosphate + 2 H(+). It participates in purine metabolism; GMP biosynthesis; GMP from XMP (L-Gln route): step 1/1. Functionally, catalyzes the synthesis of GMP from XMP. The chain is GMP synthase [glutamine-hydrolyzing] from Spiroplasma kunkelii.